The primary structure comprises 306 residues: UDP-N-acetylenolpyruvoylglucosamine reductase (306 aa).

Positions 34-199 (RVGGPAQLLF…TSVRLRGAIA (166 aa)) constitute an FAD-binding PCMH-type domain. The active site involves Arg-179. Residue Ser-228 is the Proton donor of the active site. Residue Glu-298 is part of the active site.

Belongs to the MurB family. FAD serves as cofactor.

The protein localises to the cytoplasm. The catalysed reaction is UDP-N-acetyl-alpha-D-muramate + NADP(+) = UDP-N-acetyl-3-O-(1-carboxyvinyl)-alpha-D-glucosamine + NADPH + H(+). Its pathway is cell wall biogenesis; peptidoglycan biosynthesis. Functionally, cell wall formation. The sequence is that of UDP-N-acetylenolpyruvoylglucosamine reductase from Rhodopseudomonas palustris (strain BisA53).